The sequence spans 1083 residues: Carbamoyl phosphate synthase large chain (1083 aa).

The segment at 1–402 is carboxyphosphate synthetic domain; sequence MPKRTDIRKV…AYMKALRSME (402 aa). Residues Arg-129, Arg-169, Gly-175, Gly-176, Glu-208, Val-210, Glu-215, Gly-241, Val-242, His-243, Gln-285, and Glu-299 each coordinate ATP. Residues 133–328 enclose the ATP-grasp 1 domain; sequence KAAMQKIGVA…IAKIAAKLAL (196 aa). Mg(2+)-binding residues include Gln-285, Glu-299, and Asn-301. The Mn(2+) site is built by Gln-285, Glu-299, and Asn-301. The oligomerization domain stretch occupies residues 403–554; sequence LGRVGLESPE…YSTYEEEDEA (152 aa). The interval 555-937 is carbamoyl phosphate synthetic domain; the sequence is PPTDRQKVLI…AFAKSQLAAG (383 aa). The 193-residue stretch at 679–871 folds into the ATP-grasp 2 domain; sequence AALIEKLGLK…MAKIAALCMV (193 aa). Arg-715, Arg-754, Leu-756, Glu-761, Gly-787, Val-788, His-789, Ser-790, Gln-830, and Glu-842 together coordinate ATP. Mg(2+) is bound by residues Gln-830, Glu-842, and Asn-844. Positions 830, 842, and 844 each coordinate Mn(2+). Residues 938–1078 form the MGS-like domain; the sequence is VKLPKSGKVF…QEYLGINAAP (141 aa). Residues 938 to 1083 form an allosteric domain region; sequence VKLPKSGKVF…INAAPPGTRR (146 aa).

Belongs to the CarB family. Composed of two chains; the small (or glutamine) chain promotes the hydrolysis of glutamine to ammonia, which is used by the large (or ammonia) chain to synthesize carbamoyl phosphate. Tetramer of heterodimers (alpha,beta)4. Requires Mg(2+) as cofactor. It depends on Mn(2+) as a cofactor.

It catalyses the reaction hydrogencarbonate + L-glutamine + 2 ATP + H2O = carbamoyl phosphate + L-glutamate + 2 ADP + phosphate + 2 H(+). The enzyme catalyses hydrogencarbonate + NH4(+) + 2 ATP = carbamoyl phosphate + 2 ADP + phosphate + 2 H(+). The protein operates within amino-acid biosynthesis; L-arginine biosynthesis; carbamoyl phosphate from bicarbonate: step 1/1. Its pathway is pyrimidine metabolism; UMP biosynthesis via de novo pathway; (S)-dihydroorotate from bicarbonate: step 1/3. Functionally, large subunit of the glutamine-dependent carbamoyl phosphate synthetase (CPSase). CPSase catalyzes the formation of carbamoyl phosphate from the ammonia moiety of glutamine, carbonate, and phosphate donated by ATP, constituting the first step of 2 biosynthetic pathways, one leading to arginine and/or urea and the other to pyrimidine nucleotides. The large subunit (synthetase) binds the substrates ammonia (free or transferred from glutamine from the small subunit), hydrogencarbonate and ATP and carries out an ATP-coupled ligase reaction, activating hydrogencarbonate by forming carboxy phosphate which reacts with ammonia to form carbamoyl phosphate. The sequence is that of Carbamoyl phosphate synthase large chain from Myxococcus xanthus (strain DK1622).